Consider the following 390-residue polypeptide: Queuine tRNA-ribosyltransferase (390 aa).

Catalysis depends on D90, which acts as the Proton acceptor. Substrate-binding positions include 90-94 (DSGGF), D144, Q197, and G224. Residues 255–261 (GVGTPED) are RNA binding. D274 functions as the Nucleophile in the catalytic mechanism. The RNA binding; important for wobble base 34 recognition stretch occupies residues 279–283 (TRNAR). Residues C312, C314, C317, and H354 each contribute to the Zn(2+) site.

It belongs to the queuine tRNA-ribosyltransferase family. In terms of assembly, homodimer. Within each dimer, one monomer is responsible for RNA recognition and catalysis, while the other monomer binds to the replacement base PreQ1. The cofactor is Zn(2+).

It catalyses the reaction 7-aminomethyl-7-carbaguanine + guanosine(34) in tRNA = 7-aminomethyl-7-carbaguanosine(34) in tRNA + guanine. It functions in the pathway tRNA modification; tRNA-queuosine biosynthesis. Catalyzes the base-exchange of a guanine (G) residue with the queuine precursor 7-aminomethyl-7-deazaguanine (PreQ1) at position 34 (anticodon wobble position) in tRNAs with GU(N) anticodons (tRNA-Asp, -Asn, -His and -Tyr). Catalysis occurs through a double-displacement mechanism. The nucleophile active site attacks the C1' of nucleotide 34 to detach the guanine base from the RNA, forming a covalent enzyme-RNA intermediate. The proton acceptor active site deprotonates the incoming PreQ1, allowing a nucleophilic attack on the C1' of the ribose to form the product. After dissociation, two additional enzymatic reactions on the tRNA convert PreQ1 to queuine (Q), resulting in the hypermodified nucleoside queuosine (7-(((4,5-cis-dihydroxy-2-cyclopenten-1-yl)amino)methyl)-7-deazaguanosine). The chain is Queuine tRNA-ribosyltransferase from Leptothrix cholodnii (strain ATCC 51168 / LMG 8142 / SP-6) (Leptothrix discophora (strain SP-6)).